Here is a 175-residue protein sequence, read N- to C-terminus: Putative carbonic anhydrase-like protein YbcF (175 aa).

This sequence belongs to the beta-class carbonic anhydrase family.

This is Putative carbonic anhydrase-like protein YbcF (ybcF) from Bacillus subtilis (strain 168).